The following is a 552-amino-acid chain: Glutamine--tRNA ligase (552 aa).

A 'HIGH' region motif is present at residues 33–43 (PEPNGYLHIGH). Residues 34-36 (EPN) and 40-46 (HIGHAKS) each bind ATP. Residues aspartate 66 and tyrosine 210 each coordinate L-glutamine. ATP-binding positions include threonine 229, 259–260 (RL), and 267–269 (MSK). A 'KMSKS' region motif is present at residues 266–270 (VMSKR).

It belongs to the class-I aminoacyl-tRNA synthetase family. As to quaternary structure, monomer.

The protein resides in the cytoplasm. It catalyses the reaction tRNA(Gln) + L-glutamine + ATP = L-glutaminyl-tRNA(Gln) + AMP + diphosphate. The protein is Glutamine--tRNA ligase of Clostridium perfringens (strain ATCC 13124 / DSM 756 / JCM 1290 / NCIMB 6125 / NCTC 8237 / Type A).